We begin with the raw amino-acid sequence, 580 residues long: Arginine--tRNA ligase (580 aa).

Residues 127–137 (PNLAKEMHVGH) carry the 'HIGH' region motif.

This sequence belongs to the class-I aminoacyl-tRNA synthetase family. In terms of assembly, monomer.

The protein resides in the cytoplasm. It carries out the reaction tRNA(Arg) + L-arginine + ATP = L-arginyl-tRNA(Arg) + AMP + diphosphate. This chain is Arginine--tRNA ligase, found in Idiomarina loihiensis (strain ATCC BAA-735 / DSM 15497 / L2-TR).